A 696-amino-acid chain; its full sequence is MTRSVYVTGIDRGDGRQVVELGVMELLTRQVDRVGVFRPLVHDGPDRLFELLRARYRLAQDPATVYGMDYHEASALQAEQGTDELMSTLVDRFHLVARDYDVVLVLGTDFADTQFPDELALNARLANEFGAAVIPVVGGRGQTAESVRAETRNAYRAYEGLGCDVLAMVVNRVAREDREELAARLDSLLAVPCYVLPDEPALSAPTVAQITHALGGKVLLGDDSGLARDALDFVFGGAMLPNFLNALTPGCLVVTPGDRADLVVGALAAHSAGTPPIAGVLLTLDERPSDEVLTLAARLAPGTPVVSVAGTSFPTAAELFSLEGKLNAATPRKAETALGLFERYVDTGDLLKRVSAPSSDRLTPMMFEHKLLEQARSDKRRVVLPEGTETRVLHAAEVLLRRGVCDLTLLGPVDQIRKKAADLGIDLGGSQLIDPVTSQLRDSFAEKYAQLRAHKGVSVELAYDVVADVNYFGTLMVQEGLADGMVSGSVHSTAATIRPAFEIIKTKPDTKIVSSVFFMCLADKVLVYGDCAVNPDPNAEQLCDIAVQSAATARQFGVEPRIAMLSYSTGTSGSGADVDKVREATELVRLRRDDLKIEGPIQYDAAVEPSVAATKLPGSDVAGQASVLIFPDLNTGNNTYKAVQRSAGAIAVGPVMQGLRKPVNDLSRGALVQDIVNTVAITAIQAQSPHEKATAQ.

Positions 367-696 (FEHKLLEQAR…QSPHEKATAQ (330 aa)) are phosphate acetyltransferase.

The protein in the N-terminal section; belongs to the CobB/CobQ family. This sequence in the C-terminal section; belongs to the phosphate acetyltransferase and butyryltransferase family.

The protein localises to the cytoplasm. The enzyme catalyses acetyl-CoA + phosphate = acetyl phosphate + CoA. It functions in the pathway metabolic intermediate biosynthesis; acetyl-CoA biosynthesis; acetyl-CoA from acetate: step 2/2. Involved in acetate metabolism. The sequence is that of Phosphate acetyltransferase (pta) from Streptomyces avermitilis (strain ATCC 31267 / DSM 46492 / JCM 5070 / NBRC 14893 / NCIMB 12804 / NRRL 8165 / MA-4680).